The chain runs to 259 residues: Deoxyribose-phosphate aldolase (259 aa).

The active-site Proton donor/acceptor is the aspartate 102. Catalysis depends on lysine 167, which acts as the Schiff-base intermediate with acetaldehyde. Lysine 201 functions as the Proton donor/acceptor in the catalytic mechanism.

Belongs to the DeoC/FbaB aldolase family. DeoC type 2 subfamily.

The protein localises to the cytoplasm. The catalysed reaction is 2-deoxy-D-ribose 5-phosphate = D-glyceraldehyde 3-phosphate + acetaldehyde. The protein operates within carbohydrate degradation; 2-deoxy-D-ribose 1-phosphate degradation; D-glyceraldehyde 3-phosphate and acetaldehyde from 2-deoxy-alpha-D-ribose 1-phosphate: step 2/2. Functionally, catalyzes a reversible aldol reaction between acetaldehyde and D-glyceraldehyde 3-phosphate to generate 2-deoxy-D-ribose 5-phosphate. The protein is Deoxyribose-phosphate aldolase of Escherichia fergusonii (strain ATCC 35469 / DSM 13698 / CCUG 18766 / IAM 14443 / JCM 21226 / LMG 7866 / NBRC 102419 / NCTC 12128 / CDC 0568-73).